The sequence spans 370 residues: 3-isopropylmalate dehydrogenase (370 aa).

Position 76–89 (76–89 (GPKWDQNPSELRPE)) interacts with NAD(+). The substrate site is built by Arg-96, Arg-106, Arg-134, and Asp-224. Mg(2+) contacts are provided by Asp-224, Asp-248, and Asp-252. Residue 282-294 (GSAPDIAGQNIAN) coordinates NAD(+).

Belongs to the isocitrate and isopropylmalate dehydrogenases family. LeuB type 1 subfamily. Homodimer. Mg(2+) serves as cofactor. Mn(2+) is required as a cofactor.

Its subcellular location is the cytoplasm. The catalysed reaction is (2R,3S)-3-isopropylmalate + NAD(+) = 4-methyl-2-oxopentanoate + CO2 + NADH. The protein operates within amino-acid biosynthesis; L-leucine biosynthesis; L-leucine from 3-methyl-2-oxobutanoate: step 3/4. Its function is as follows. Catalyzes the oxidation of 3-carboxy-2-hydroxy-4-methylpentanoate (3-isopropylmalate) to 3-carboxy-4-methyl-2-oxopentanoate. The product decarboxylates to 4-methyl-2 oxopentanoate. The polypeptide is 3-isopropylmalate dehydrogenase (Bacillus licheniformis (strain ATCC 14580 / DSM 13 / JCM 2505 / CCUG 7422 / NBRC 12200 / NCIMB 9375 / NCTC 10341 / NRRL NRS-1264 / Gibson 46)).